We begin with the raw amino-acid sequence, 1292 residues long: Zinc finger protein 423 (1292 aa).

Basic residues predominate over residues 1 to 11 (MSRRKQAKPRS). 3 disordered regions span residues 1–21 (MSRR…EASD), 33–70 (AGGL…EDVE), and 95–125 (AHRC…SPTQ). Positions 41–54 (ECDRKTSRALEDRN) are enriched in basic and acidic residues. Phosphoserine occurs at positions 55 and 58. A C2H2-type 1; degenerate zinc finger spans residues 75 to 101 (YTCDHCQQDFESLADLTDHRAHRCPGD). A compositionally biased stretch (polar residues) spans 110–125 (WVASSPSSKDVASPTQ). 7 C2H2-type zinc fingers span residues 146-168 (YPCQ…EQIH), 174-196 (FKCT…IKLH), 202-224 (YHCH…LKTH), 230-252 (FKCS…MQAH), 271-294 (FMCD…LTLH), 303-326 (LQCI…HQAH), and 331-353 (HKCP…LDSH). A disordered region spans residues 354 to 407 (RQPDSSNHSVSPDPVLGSVASMSSATPDSSASVERGSTPDSTLKPLRGQKKMRD). Residues 371–385 (SVASMSSATPDSSAS) are compositionally biased toward low complexity. Residues 417–441 (YSCPYCSKRDFTSLAVLEIHLKTIH) form a C2H2-type 9; degenerate zinc finger. C2H2-type zinc fingers lie at residues 449–472 (HTCQ…RKLH), 488–511 (FHCN…RVSH), and 525–548 (FFCN…QQAH). A C2H2-type 13; atypical zinc finger spans residues 571–596 (YSCPYCTNSPIFGSILKLTKHIKENH). Residues 598–635 (NIPLAHSKKSKAEQSPVSSDVEVSSPKRQRLSGSANSI) are disordered. Position 612 is a phosphoserine (serine 612). Residues 612-623 (SPVSSDVEVSSP) show a composition bias toward low complexity. 7 consecutive C2H2-type zinc fingers follow at residues 640–662 (YPCN…LKLH), 670–692 (QACP…LTVH), 700–723 (YVCE…LDMH), 728–751 (YHCT…AVKH), 758–781 (YRCT…KHSH), 789–811 (HKCI…ITTH), and 815–838 (YNCR…REKH). The C2H2-type 21; degenerate zinc-finger motif lies at 894–916 (YGCDICGAAYTMEVLLQNHRLRD). C2H2-type zinc fingers lie at residues 938-960 (HKCN…LQTH), 967-989 (YMCP…KVTH), and 1028-1050 (FRCV…GTFH). At serine 1062 the chain carries Phosphoserine. Residues 1072–1090 (YKCALCLKEFRSKQDLVRL) form a C2H2-type 25; degenerate zinc finger. C2H2-type zinc fingers lie at residues 1128–1151 (LRCP…QVDH), 1176–1198 (YQCI…VANH), 1206–1228 (HECK…LIEH), 1237–1260 (FKCP…FAVH), and 1267–1290 (YDCS…MSQH). Positions 1144–1155 (ESHMQVDHRDLT) are enriched in basic and acidic residues. The segment at 1144–1171 (ESHMQVDHRDLTPETSGPRKGAQTSPVP) is disordered.

Belongs to the krueppel C2H2-type zinc-finger protein family. In terms of assembly, homodimer. Interacts with SMAD1 and SMAD4. Interacts with EBF1. Interacts with PARP1. Interacts with CEP290. Within the cerebellum, Zfp423 is expressed in both ventricular and external germinal zones. Transiently expressed in newly differentiating olfactory-receptor neurons.

It localises to the nucleus. Transcription factor that can both act as an activator or a repressor depending on the context. Plays a central role in BMP signaling and olfactory neurogenesis. Associates with SMADs in response to BMP2 leading to activate transcription of BMP target genes. Acts as a transcriptional repressor via its interaction with EBF1, a transcription factor involved in terminal olfactory receptor neurons differentiation; this interaction preventing EBF1 to bind DNA and activate olfactory-specific genes. Involved in olfactory neurogenesis by participating in a developmental switch that regulates the transition from differentiation to maturation in olfactory receptor neurons. Controls proliferation and differentiation of neural precursors in cerebellar vermis formation. The sequence is that of Zinc finger protein 423 (Znf423) from Mus musculus (Mouse).